Consider the following 459-residue polypeptide: Bifunctional protein GlmU (459 aa).

Residues 1-229 form a pyrophosphorylase region; the sequence is MSNFAIILAA…FDESLGVNDR (229 aa). UDP-N-acetyl-alpha-D-glucosamine is bound by residues 8-11, Lys22, Gln72, and 77-78; these read LAAG and GT. Asp102 is a binding site for Mg(2+). Residues Gly139, Glu154, Asn169, and Asn227 each contribute to the UDP-N-acetyl-alpha-D-glucosamine site. Position 227 (Asn227) interacts with Mg(2+). A linker region spans residues 230–250; the sequence is VALATAESVMRRRINHKHMVN. The interval 251–459 is N-acetyltransferase; that stretch reads GVSFVNPEAT…TRLPHHPKNQ (209 aa). Positions 332 and 350 each coordinate UDP-N-acetyl-alpha-D-glucosamine. The active-site Proton acceptor is His362. Residues Tyr365 and Asn376 each contribute to the UDP-N-acetyl-alpha-D-glucosamine site. Acetyl-CoA-binding positions include Ala379, 385-386, Ser404, Ala422, and Arg439; that span reads NY.

In the N-terminal section; belongs to the N-acetylglucosamine-1-phosphate uridyltransferase family. The protein in the C-terminal section; belongs to the transferase hexapeptide repeat family. In terms of assembly, homotrimer. Requires Mg(2+) as cofactor.

Its subcellular location is the cytoplasm. The enzyme catalyses alpha-D-glucosamine 1-phosphate + acetyl-CoA = N-acetyl-alpha-D-glucosamine 1-phosphate + CoA + H(+). It catalyses the reaction N-acetyl-alpha-D-glucosamine 1-phosphate + UTP + H(+) = UDP-N-acetyl-alpha-D-glucosamine + diphosphate. The protein operates within nucleotide-sugar biosynthesis; UDP-N-acetyl-alpha-D-glucosamine biosynthesis; N-acetyl-alpha-D-glucosamine 1-phosphate from alpha-D-glucosamine 6-phosphate (route II): step 2/2. It participates in nucleotide-sugar biosynthesis; UDP-N-acetyl-alpha-D-glucosamine biosynthesis; UDP-N-acetyl-alpha-D-glucosamine from N-acetyl-alpha-D-glucosamine 1-phosphate: step 1/1. Its pathway is bacterial outer membrane biogenesis; LPS lipid A biosynthesis. In terms of biological role, catalyzes the last two sequential reactions in the de novo biosynthetic pathway for UDP-N-acetylglucosamine (UDP-GlcNAc). The C-terminal domain catalyzes the transfer of acetyl group from acetyl coenzyme A to glucosamine-1-phosphate (GlcN-1-P) to produce N-acetylglucosamine-1-phosphate (GlcNAc-1-P), which is converted into UDP-GlcNAc by the transfer of uridine 5-monophosphate (from uridine 5-triphosphate), a reaction catalyzed by the N-terminal domain. This chain is Bifunctional protein GlmU, found in Streptococcus pneumoniae serotype 2 (strain D39 / NCTC 7466).